We begin with the raw amino-acid sequence, 696 residues long: Elongation factor G (696 aa).

The 283-residue stretch at 8–290 folds into the tr-type G domain; the sequence is ERYRNIGVMA…AVLDYLPSPA (283 aa). Residues 17–24, 88–92, and 142–145 each bind GTP; these read AHIDAGKT, DTPGH, and NKMD.

Belongs to the TRAFAC class translation factor GTPase superfamily. Classic translation factor GTPase family. EF-G/EF-2 subfamily.

It localises to the cytoplasm. Its function is as follows. Catalyzes the GTP-dependent ribosomal translocation step during translation elongation. During this step, the ribosome changes from the pre-translocational (PRE) to the post-translocational (POST) state as the newly formed A-site-bound peptidyl-tRNA and P-site-bound deacylated tRNA move to the P and E sites, respectively. Catalyzes the coordinated movement of the two tRNA molecules, the mRNA and conformational changes in the ribosome. This Nitrosospira multiformis (strain ATCC 25196 / NCIMB 11849 / C 71) protein is Elongation factor G.